A 228-amino-acid polypeptide reads, in one-letter code: Uracil-DNA glycosylase (228 aa).

Asp-64 serves as the catalytic Proton acceptor.

The protein belongs to the uracil-DNA glycosylase (UDG) superfamily. UNG family.

Its subcellular location is the cytoplasm. The enzyme catalyses Hydrolyzes single-stranded DNA or mismatched double-stranded DNA and polynucleotides, releasing free uracil.. Functionally, excises uracil residues from the DNA which can arise as a result of misincorporation of dUMP residues by DNA polymerase or due to deamination of cytosine. The polypeptide is Uracil-DNA glycosylase (Yersinia pseudotuberculosis serotype O:1b (strain IP 31758)).